Consider the following 322-residue polypeptide: MMDPYATTHRRLKQIQGHFMTPQSLRVLPQFTLNSLNNKSNISSMWRKLTTSSRIGAVSIPPLTAYYIFKLFKGKHRKFINDKDIEIIIKEISGNDIFDQVVKLASKVIGFLGVIQISNRMETHLGVKLTFSKSYQLLVTLSSILDTILSFTKLTQKWGIIFCIVSILYCIINIRMLYLTLAHNKTVERLLSVTRTKCQGFKMNIPALGAWGSVVAITFYIWLKEAKKLAQSTGGILTMTAFLLSAIAAIRVGLRAAMTSFPGLTPFEGSSAVVIAIILGALPLIPYYTTSEWSRTLLSGYLSIVISMIINSFFAWKTPSML.

5 helical membrane-spanning segments follow: residues 159-179, 203-223, 234-254, 267-287, and 296-316; these read GIIF…MLYL, MNIP…YIWL, GGIL…RVGL, FEGS…LIPY, and TLLS…FFAW.

The protein resides in the membrane. This is an uncharacterized protein from Dictyostelium discoideum (Social amoeba).